A 506-amino-acid polypeptide reads, in one-letter code: MIYAAPGTPGAVVTFKPRYGNYIGGEFVPPVKGQYFTNTSPVNGQPIAEFPRSTAEDIDKALDAAHAAADAWGRTSVQERSNILLKIADRIEQNLELLAVTETWDNGKAVRETLNADIPLAADHFRYFAGCIRAQEGSAAEINDSTVAYHIHEPLGVVGQIIPWNFPLLMAAWKLAPALAAGNCVVLKPAEQTPLGICVLLELIGDLLPPGVLNVVQGFGREAGEALATSKRIAKIAFTGSTPVGSHILKCAAESIIPSTVELGGKSPNIYFEDIMQAEPAFIEKAAEGLVLAFFNQGEVCTCPSRALVQESIYPAFMEEVLKKVRAIKRGDPLDTETMVGAQASQQQYEKILSYLDIAQQEGAELLAGGSVEKLEGNLASGYYIQPTLLKGHNGMRVFQEEIFGPVVGVTTFKDEAEALAIANDTEYGLGAGLWTRDINRAYRMGRGIKAGRVWTNCYHLYPAHAAFGGYKKSGVGRETHKMMLDHYQQTKNLLVSYDIDPLGFF.

Catalysis depends on residues E262 and C301.

It belongs to the aldehyde dehydrogenase family.

The catalysed reaction is acetaldehyde + NAD(+) + H2O = acetate + NADH + 2 H(+). It participates in alcohol metabolism; ethanol degradation; acetate from ethanol: step 2/2. Catalyzes the NAD(+)-dependent oxidation of acetaldehyde to acetate. Is likely a component of the ethanol oxidation system that allows P.aeruginosa to grow on ethanol as the sole carbon and energy source. This is Acetaldehyde dehydrogenase from Pseudomonas aeruginosa.